An 81-amino-acid polypeptide reads, in one-letter code: ATP synthase subunit c, chloroplastic (81 aa).

2 helical membrane-spanning segments follow: residues 3–23 and 57–77; these read PIIS…ASIG and LAFM…LLFA.

The protein belongs to the ATPase C chain family. F-type ATPases have 2 components, F(1) - the catalytic core - and F(0) - the membrane proton channel. F(1) has five subunits: alpha(3), beta(3), gamma(1), delta(1), epsilon(1). F(0) has four main subunits: a(1), b(1), b'(1) and c(10-14). The alpha and beta chains form an alternating ring which encloses part of the gamma chain. F(1) is attached to F(0) by a central stalk formed by the gamma and epsilon chains, while a peripheral stalk is formed by the delta, b and b' chains.

It is found in the plastid. The protein resides in the chloroplast thylakoid membrane. In terms of biological role, f(1)F(0) ATP synthase produces ATP from ADP in the presence of a proton or sodium gradient. F-type ATPases consist of two structural domains, F(1) containing the extramembraneous catalytic core and F(0) containing the membrane proton channel, linked together by a central stalk and a peripheral stalk. During catalysis, ATP synthesis in the catalytic domain of F(1) is coupled via a rotary mechanism of the central stalk subunits to proton translocation. Its function is as follows. Key component of the F(0) channel; it plays a direct role in translocation across the membrane. A homomeric c-ring of between 10-14 subunits forms the central stalk rotor element with the F(1) delta and epsilon subunits. This chain is ATP synthase subunit c, chloroplastic, found in Cicer arietinum (Chickpea).